The sequence spans 438 residues: Serine--tRNA ligase (438 aa).

Thr245–Glu247 is an L-serine binding site. Arg276 to Glu278 is an ATP binding site. Residue Glu299 participates in L-serine binding. Residue Glu363–Ser366 participates in ATP binding. Ser398 serves as a coordination point for L-serine.

This sequence belongs to the class-II aminoacyl-tRNA synthetase family. Type-1 seryl-tRNA synthetase subfamily. As to quaternary structure, homodimer. The tRNA molecule binds across the dimer.

It localises to the cytoplasm. The catalysed reaction is tRNA(Ser) + L-serine + ATP = L-seryl-tRNA(Ser) + AMP + diphosphate + H(+). It catalyses the reaction tRNA(Sec) + L-serine + ATP = L-seryl-tRNA(Sec) + AMP + diphosphate + H(+). It functions in the pathway aminoacyl-tRNA biosynthesis; selenocysteinyl-tRNA(Sec) biosynthesis; L-seryl-tRNA(Sec) from L-serine and tRNA(Sec): step 1/1. Functionally, catalyzes the attachment of serine to tRNA(Ser). Is also able to aminoacylate tRNA(Sec) with serine, to form the misacylated tRNA L-seryl-tRNA(Sec), which will be further converted into selenocysteinyl-tRNA(Sec). This Verminephrobacter eiseniae (strain EF01-2) protein is Serine--tRNA ligase.